Consider the following 445-residue polypeptide: 3-phosphoshikimate 1-carboxyvinyltransferase (445 aa).

The interval 1–24 is disordered; it reads MEHAATLPQTSRRPATPLTGTITV. Positions 7–22 are enriched in polar residues; that stretch reads LPQTSRRPATPLTGTI. The 3-phosphoshikimate site is built by Lys-28, Ser-29, and Arg-33. Lys-28 contributes to the phosphoenolpyruvate binding site. Positions 101 and 129 each coordinate phosphoenolpyruvate. 4 residues coordinate 3-phosphoshikimate: Ser-174, Gln-176, Asp-326, and Lys-353. Gln-176 contributes to the phosphoenolpyruvate binding site. Asp-326 (proton acceptor) is an active-site residue. 2 residues coordinate phosphoenolpyruvate: Arg-357 and Arg-399.

This sequence belongs to the EPSP synthase family. Monomer.

Its subcellular location is the cytoplasm. It carries out the reaction 3-phosphoshikimate + phosphoenolpyruvate = 5-O-(1-carboxyvinyl)-3-phosphoshikimate + phosphate. It functions in the pathway metabolic intermediate biosynthesis; chorismate biosynthesis; chorismate from D-erythrose 4-phosphate and phosphoenolpyruvate: step 6/7. Catalyzes the transfer of the enolpyruvyl moiety of phosphoenolpyruvate (PEP) to the 5-hydroxyl of shikimate-3-phosphate (S3P) to produce enolpyruvyl shikimate-3-phosphate and inorganic phosphate. The polypeptide is 3-phosphoshikimate 1-carboxyvinyltransferase (Acidiphilium cryptum (strain JF-5)).